The sequence spans 597 residues: tRNA uridine 5-carboxymethylaminomethyl modification enzyme MnmG (597 aa).

Residue 10 to 15 participates in FAD binding; the sequence is GGGHAG. NAD(+) is bound at residue 267–281; it reads GPRYCPSIEDKVVRF.

The protein belongs to the MnmG family. As to quaternary structure, homodimer. Heterotetramer of two MnmE and two MnmG subunits. FAD is required as a cofactor.

The protein localises to the cytoplasm. In terms of biological role, NAD-binding protein involved in the addition of a carboxymethylaminomethyl (cmnm) group at the wobble position (U34) of certain tRNAs, forming tRNA-cmnm(5)s(2)U34. The chain is tRNA uridine 5-carboxymethylaminomethyl modification enzyme MnmG from Thermus thermophilus (strain ATCC 27634 / DSM 579 / HB8).